The following is a 406-amino-acid chain: Probable 26S proteasome regulatory subunit 10B (406 aa).

An ATP-binding site is contributed by 191-198; that stretch reads GPPGTGKT.

The protein belongs to the AAA ATPase family.

The protein resides in the cytoplasm. It is found in the nucleus. The 26S proteasome is involved in the ATP-dependent degradation of ubiquitinated proteins. The regulatory (or ATPase) complex confers ATP dependency and substrate specificity to the 26S complex. This chain is Probable 26S proteasome regulatory subunit 10B (rpt-4), found in Caenorhabditis elegans.